The chain runs to 319 residues: NAP1-binding protein (319 aa).

The segment covering 34 to 43 has biased composition (basic residues); the sequence is SALRSRRKQM. The interval 34 to 74 is disordered; the sequence is SALRSRRKQMRPTGKSVLKRPRKVTDRKTEEKIRTNRRKTP. Residues 56–67 show a composition bias toward basic and acidic residues; it reads KVTDRKTEEKIR. Phosphoserine occurs at positions 251 and 260. The disordered stretch occupies residues 278–319; the sequence is EMQPLQENISPACPTPPYRSRETEKEDETLSPISVDFSSYLS.

In terms of assembly, interacts with NDC1 and MPS2.

The protein is NAP1-binding protein (NBP1) of Saccharomyces cerevisiae (strain ATCC 204508 / S288c) (Baker's yeast).